Here is a 264-residue protein sequence, read N- to C-terminus: 3-methyl-2-oxobutanoate hydroxymethyltransferase (264 aa).

Mg(2+) contacts are provided by Asp45 and Asp84. 3-methyl-2-oxobutanoate is bound by residues 45-46 (DS), Asp84, and Lys112. Residue Glu114 coordinates Mg(2+). The active-site Proton acceptor is the Glu181.

This sequence belongs to the PanB family. In terms of assembly, homodecamer; pentamer of dimers. Mg(2+) serves as cofactor.

It is found in the cytoplasm. It catalyses the reaction 3-methyl-2-oxobutanoate + (6R)-5,10-methylene-5,6,7,8-tetrahydrofolate + H2O = 2-dehydropantoate + (6S)-5,6,7,8-tetrahydrofolate. It functions in the pathway cofactor biosynthesis; (R)-pantothenate biosynthesis; (R)-pantoate from 3-methyl-2-oxobutanoate: step 1/2. In terms of biological role, catalyzes the reversible reaction in which hydroxymethyl group from 5,10-methylenetetrahydrofolate is transferred onto alpha-ketoisovalerate to form ketopantoate. The chain is 3-methyl-2-oxobutanoate hydroxymethyltransferase from Shewanella sp. (strain MR-7).